Consider the following 208-residue polypeptide: GTP-binding protein YPTM1 (208 aa).

GTP contacts are provided by residues Gly15–Cys23, Tyr33–Thr40, Asp63–Gln67, Asn121–Asp124, and Ser151–Lys153. The Effector region motif lies at Tyr37–Phe45. The interval Gln189–Thr208 is disordered. The span at Gln196 to Thr208 shows a compositional bias: polar residues. 2 S-geranylgeranyl cysteine lipidation sites follow: Cys205 and Cys206.

This sequence belongs to the small GTPase superfamily. Rab family. In terms of tissue distribution, low levels in coleoptiles.

Its subcellular location is the cell membrane. In terms of biological role, protein transport. Probably involved in vesicular traffic. This chain is GTP-binding protein YPTM1 (YPTM1), found in Zea mays (Maize).